The sequence spans 683 residues: E3 ubiquitin-protein ligase WAVH1 (683 aa).

The RING-type; atypical zinc finger occupies 130–176 (CGICLQSVKSGQGTAIFTAECSHTFHFPCVTSRAAANHNRLASCPVC). A VWFA domain is found at 302 to 438 (DLVAVLDVSG…AHSRIPIHTI (137 aa)).

In terms of tissue distribution, expressed in root tips and leaf primordia.

The catalysed reaction is S-ubiquitinyl-[E2 ubiquitin-conjugating enzyme]-L-cysteine + [acceptor protein]-L-lysine = [E2 ubiquitin-conjugating enzyme]-L-cysteine + N(6)-ubiquitinyl-[acceptor protein]-L-lysine.. Functionally, E3 ubiquitin-protein ligase involved in the regulation of root growth. Acts as a positive regulator of root gravitropism. Possesses E3 protein ligase activity in vitro. In Arabidopsis thaliana (Mouse-ear cress), this protein is E3 ubiquitin-protein ligase WAVH1.